We begin with the raw amino-acid sequence, 571 residues long: MTRAGDHNRQRGCCGSLADYLTSAKFLLYLGHSLSTWGDRMWHFAVSVFLVELYGNSLLLTAVYGLVVAGSVLVLGAIIGDWVDKNARLKVAQTSLVVQNVSVILCGIILMMVFLHKHELLTMYHGWVLTSCYILIITIANIANLASTATAITIQRDWIVVVAGEDRSKLANMNATIRRIDQLTNILAPMAVGQIMTFGSPVIGCGFISGWNLVSMCVEYVLLWKVYQKTPALAVKAGLKEEETELKQLNLHKDTEPKPLEGTHLMGVKDSNIHELEHEQEPTCASQMAEPFRTFRDGWVSYYNQPVFLAGMGLAFLYMTVLGFDCITTGYAYTQGLSGSILSILMGASAITGIMGTVAFTWLRRKCGLVRTGLISGLAQLSCLILCVISVFMPGSPLDLSVSPFEDIRSRFIQGESITPTKIPEITTEIYMSNGSNSANIVPETSPESVPIISVSLLFAGVIAARIGLWSFDLTVTQLLQENVIESERGIINGVQNSMNYLLDLLHFIMVILAPNPEAFGLLVLISVSFVAMGHIMYFRFAQNTLGNKLFACGPDAKEVRKENQANTSVV.

Over 1 to 23 (MTRAGDHNRQRGCCGSLADYLTS) the chain is Cytoplasmic. The helical transmembrane segment at 24–53 (AKFLLYLGHSLSTWGDRMWHFAVSVFLVEL) threads the bilayer. Positions 39 and 43 each coordinate Fe cation. The Extracellular portion of the chain corresponds to 54–57 (YGNS). A helical membrane pass occupies residues 58–84 (LLLTAVYGLVVAGSVLVLGAIIGDWVD). The Cytoplasmic portion of the chain corresponds to 85–87 (KNA). A helical membrane pass occupies residues 88-118 (RLKVAQTSLVVQNVSVILCGIILMMVFLHKH). Residues 119 to 126 (ELLTMYHG) are Extracellular-facing. Residues 127-162 (WVLTSCYILIITIANIANLASTATAITIQRDWIVVV) form a helical membrane-spanning segment. The Cytoplasmic segment spans residues 163–164 (AG). Residues 165 to 195 (EDRSKLANMNATIRRIDQLTNILAPMAVGQI) traverse the membrane as a helical segment. The Extracellular segment spans residues 196-202 (MTFGSPV). A helical transmembrane segment spans residues 203–229 (IGCGFISGWNLVSMCVEYVLLWKVYQK). Residues 230-306 (TPALAVKAGL…DGWVSYYNQP (77 aa)) are Cytoplasmic-facing. Residues 307–333 (VFLAGMGLAFLYMTVLGFDCITTGYAY) form a helical membrane-spanning segment. Fe cation is bound at residue Cys326. Residues 334–338 (TQGLS) are Extracellular-facing. Residues 339-366 (GSILSILMGASAITGIMGTVAFTWLRRK) traverse the membrane as a helical segment. At 367-368 (CG) the chain is on the cytoplasmic side. The chain crosses the membrane as a helical span at residues 369-391 (LVRTGLISGLAQLSCLILCVISV). Over 392-453 (FMPGSPLDLS…ETSPESVPII (62 aa)) the chain is Extracellular. The N-linked (GlcNAc...) asparagine glycan is linked to Asn434. Residues 454-483 (SVSLLFAGVIAARIGLWSFDLTVTQLLQEN) traverse the membrane as a helical segment. Residues 484–488 (VIESE) lie on the Cytoplasmic side of the membrane. The chain crosses the membrane as a helical span at residues 489–513 (RGIINGVQNSMNYLLDLLHFIMVIL). Position 507 (His507) interacts with Fe cation. Topologically, residues 514–516 (APN) are extracellular. Residues 517–542 (PEAFGLLVLISVSFVAMGHIMYFRFA) form a helical membrane-spanning segment. Over 543–571 (QNTLGNKLFACGPDAKEVRKENQANTSVV) the chain is Cytoplasmic.

This sequence belongs to the ferroportin (FP) (TC 2.A.100) family. SLC40A subfamily. As to quaternary structure, identified in a complex with STOM. Interacts with HAMP; affinity of the peptide hormone HAMP for SLC40A1 increases by 80-fold in the presence of iron and the interaction promotes SLC40A1 ubiquitination and degradation. Part of a complex composed of SLC40A1/ferroportin, TF/transferrin and HEPH/hephaestin that transfers iron from cells to transferrin. Post-translationally, polyubiquitinated by RNF217; leading to proteasomal degradation. Under conditions of high systemic iron levels, both the hormone peptide hepcidin/HAMP and holo(iron bound)-transferrin/TF induce the ubiquitination, internalization and proteasomal degradation of SLC40A1 to control iron release from cells. In terms of tissue distribution, detected in erythrocytes (at protein level). Expressed in placenta, intestine, muscle and spleen. Highly expressed in mature red blood.

The protein localises to the cell membrane. Its subcellular location is the basolateral cell membrane. It carries out the reaction Fe(2+)(in) = Fe(2+)(out). Functionally, transports Fe(2+) from the inside of a cell to the outside of the cell, playing a key role for maintaining systemic iron homeostasis. Transports iron from intestinal, splenic, hepatic cells, macrophages and erythrocytes into the blood to provide iron to other tissues. Controls therefore dietary iron uptake, iron recycling by macrophages and erythrocytes, and release of iron stores in hepatocytes. When iron is in excess in serum, circulating HAMP/hepcidin levels increase resulting in a degradation of SLC40A1, thus limiting the iron efflux to plasma. This is Ferroportin from Homo sapiens (Human).